A 214-amino-acid polypeptide reads, in one-letter code: UPF0758 protein (214 aa).

The region spanning 92–214 is the MPN domain; sequence VLSSWQALLD…ELSFRAEGLL (123 aa). Residues His-163, His-165, and Asp-176 each contribute to the Zn(2+) site. Residues 163-176 carry the JAMM motif motif; it reads HNHPSGDPTPSQAD.

This sequence belongs to the UPF0758 family.

This chain is UPF0758 protein, found in Rhodobacter capsulatus (Rhodopseudomonas capsulata).